The primary structure comprises 128 residues: Transcription antitermination protein NusB (128 aa).

It belongs to the NusB family.

Involved in transcription antitermination. Required for transcription of ribosomal RNA (rRNA) genes. Binds specifically to the boxA antiterminator sequence of the ribosomal RNA (rrn) operons. The protein is Transcription antitermination protein NusB of Listeria welshimeri serovar 6b (strain ATCC 35897 / DSM 20650 / CCUG 15529 / CIP 8149 / NCTC 11857 / SLCC 5334 / V8).